Consider the following 953-residue polypeptide: Nucleotide-binding oligomerization domain-containing protein 1 (953 aa).

A CARD domain is found at 15–105; it reads ESHPHIQLLK…AYVDLRPWLL (91 aa). One can recognise an NACHT domain in the interval 196–531; the sequence is ETIFILGDAG…AFFTAFFLVL (336 aa). Residue 202 to 209 coordinates ATP; that stretch reads GDAGVGKS. S-palmitoyl cysteine attachment occurs at residues C558 and C567. 9 LRR repeats span residues 632-656, 702-725, 727-750, 755-778, 783-806, 839-862, 867-891, 895-918, and 923-946; these read LKSL…IWML, FPKR…ELQP, FSRL…VLSE, YKIV…YVTK, CKGL…YLAL, HPSL…SLAR, NTSL…LAEM, NQTL…QLAD, and NTGI…VYED. A lipid anchor (S-palmitoyl cysteine) is attached at C952.

The protein belongs to the NOD1-NOD2 family. As to quaternary structure, homooligomer: homooligomerizes following ligand-binding, promoting RIPK2 recruitment. Interacts (via CARD domain) with RIPK2 (via CARD domain). Following RIPK2 recruitment, RIPK2 homooligomerizes via its CARD domain and forms long filaments named RIPosomes. Interacts with ARHGEF2. Interacts (via CARD domain) with ubiquitin; inhibiting interaction with RIPK2. Interacts with NLRP10 and recruits it to the cell membrane following invasive bacterial infection. Interacts with IFIH1; this interaction promotes transcription of antiviral genes and inhibition of viral replication. Interacts with IRGM; promoting NOD1 degradation. Interacts with ATG16L1. Post-translationally, palmitoylated. Palmitoylation is required for proper recruitment to the bacterial entry site and hence for proper signaling upon cognate peptidoglycan detection. Ubiquitinated. 'Lys-48'-linked polyubiquitination by RNF34 promotes proteasomal degradation and thereby negatively regulates NOD1 for instance in NF-kappa-B activation. In terms of processing, degraded via selective autophagy following interaction with IRGM. IRGM promotes NOD1-RIPK2 RIPosome recruitment to autophagosome membranes, promoting their SQSTM1/p62-dependent autophagic degradation. As to expression, highly expressed in adult heart, skeletal muscle, pancreas, spleen and ovary. Also detected in placenta, lung, liver, kidney, thymus, testis, small intestine and colon.

It localises to the cell membrane. The protein resides in the apical cell membrane. The protein localises to the basolateral cell membrane. It is found in the cytoplasm. In terms of biological role, pattern recognition receptor (PRR) that detects bacterial peptidoglycan fragments and other danger signals and thus participates in both innate and adaptive immune responses. Specifically recognizes and binds gamma-D-glutamyl-meso-diaminopimelic acid (iE-DAP), a dipeptide present in peptidoglycan of Gram-negative bacteria. Preferentially binds iE-DAP in tripeptide-containing muropeptides (MurNAc-TriDAP or TriDAP). Ligand binding triggers oligomerization that facilitates the binding and subsequent activation of the proximal adapter receptor-interacting RIPK2. Following recruitment, RIPK2 undergoes 'Met-1'- (linear) and 'Lys-63'-linked polyubiquitination by E3 ubiquitin-protein ligases XIAP, BIRC2, BIRC3 and the LUBAC complex, becoming a scaffolding protein for downstream effectors, triggering activation of the NF-kappa-B and MAP kinases signaling. This in turn leads to the transcriptional activation of hundreds of genes involved in immune response. Also acts as a regulator of antiviral response elicited by dsRNA and the expression of RLR pathway members by targeting IFIH1 and TRAF3 to modulate the formation of IFIH1-MAVS and TRAF3-MAVS complexes leading to increased transcription of type I IFNs. Also acts as a regulator of autophagy via its interaction with ATG16L1, possibly by recruiting ATG16L1 at the site of bacterial entry. Besides recognizing pathogens, also involved in the endoplasmic reticulum stress response: acts by sensing and binding to the cytosolic metabolite sphingosine-1-phosphate generated in response to endoplasmic reticulum stress, initiating an inflammation process that leads to activation of the NF-kappa-B and MAP kinases signaling. In addition, plays a role in insulin trafficking in beta cells in a cell-autonomous manner. Mechanistically, upon recognizing cognate ligands, NOD1 and RIPK2 localize to insulin vesicles where they recruit RAB1A to direct insulin trafficking through the cytoplasm. In contrast to isoform 1, does not efficiently recognize and bind gamma-D-glutamyl-meso-diaminopimelic acid (iE-DAP) ligand. The polypeptide is Nucleotide-binding oligomerization domain-containing protein 1 (Homo sapiens (Human)).